The following is a 440-amino-acid chain: 26S proteasome regulatory subunit 4 (440 aa).

Residues 1–13 are compositionally biased toward gly residues; sequence MGQSQSGGHGPGG. The tract at residues 1-49 is disordered; the sequence is MGQSQSGGHGPGGGKKDDKDKKKKYEPPVPTRVGKKKKKTKGPDAASKL. Residue Gly2 is the site of N-myristoyl glycine attachment. A Phosphoserine modification is found at Ser4. The span at 14–26 shows a compositional bias: basic and acidic residues; that stretch reads GKKDDKDKKKKYE. Thr53 is modified (phosphothreonine). Residues 84-104 are disordered; that stretch reads QMKPLEEKQEEERSKVDDLRG. Residues 86–103 show a composition bias toward basic and acidic residues; sequence KPLEEKQEEERSKVDDLR. Residue 226–233 participates in ATP binding; the sequence is GPPGTGKT. A Glycyl lysine isopeptide (Lys-Gly) (interchain with G-Cter in ubiquitin) cross-link involves residue Lys237. Lys258 is modified (N6-acetyllysine). Thr434 carries the post-translational modification Phosphothreonine. A Phosphotyrosine modification is found at Tyr439.

Belongs to the AAA ATPase family. As to quaternary structure, component of the 19S proteasome regulatory particle complex. The 26S proteasome consists of a 20S core particle (CP) and two 19S regulatory subunits (RP). The regulatory particle is made of a lid composed of 9 subunits, a base containing 6 ATPases including PSMC1 and few additional components. Interacts with SCA7. Interacts with NGLY1. Interacts with PAAF1.

The protein localises to the cytoplasm. It localises to the nucleus. Its subcellular location is the membrane. Functionally, component of the 26S proteasome, a multiprotein complex involved in the ATP-dependent degradation of ubiquitinated proteins. This complex plays a key role in the maintenance of protein homeostasis by removing misfolded or damaged proteins, which could impair cellular functions, and by removing proteins whose functions are no longer required. Therefore, the proteasome participates in numerous cellular processes, including cell cycle progression, apoptosis, or DNA damage repair. PSMC1 belongs to the heterohexameric ring of AAA (ATPases associated with diverse cellular activities) proteins that unfolds ubiquitinated target proteins that are concurrently translocated into a proteolytic chamber and degraded into peptides. The polypeptide is 26S proteasome regulatory subunit 4 (PSMC1) (Homo sapiens (Human)).